A 180-amino-acid polypeptide reads, in one-letter code: 4-hydroxy-3-methylbut-2-enyl diphosphate reductase (180 aa).

Cys12 is a [4Fe-4S] cluster binding site. Residues His41 and His74 each coordinate (2E)-4-hydroxy-3-methylbut-2-enyl diphosphate. Dimethylallyl diphosphate is bound by residues His41 and His74. Residues His41 and His74 each contribute to the isopentenyl diphosphate site. [4Fe-4S] cluster is bound at residue Cys96. Residue His124 coordinates (2E)-4-hydroxy-3-methylbut-2-enyl diphosphate. A dimethylallyl diphosphate-binding site is contributed by His124. Isopentenyl diphosphate is bound at residue His124. Glu126 (proton donor) is an active-site residue. Residue Thr168 participates in (2E)-4-hydroxy-3-methylbut-2-enyl diphosphate binding.

This sequence belongs to the IspH family. It depends on [4Fe-4S] cluster as a cofactor.

The enzyme catalyses isopentenyl diphosphate + 2 oxidized [2Fe-2S]-[ferredoxin] + H2O = (2E)-4-hydroxy-3-methylbut-2-enyl diphosphate + 2 reduced [2Fe-2S]-[ferredoxin] + 2 H(+). It catalyses the reaction dimethylallyl diphosphate + 2 oxidized [2Fe-2S]-[ferredoxin] + H2O = (2E)-4-hydroxy-3-methylbut-2-enyl diphosphate + 2 reduced [2Fe-2S]-[ferredoxin] + 2 H(+). It participates in isoprenoid biosynthesis; dimethylallyl diphosphate biosynthesis; dimethylallyl diphosphate from (2E)-4-hydroxy-3-methylbutenyl diphosphate: step 1/1. Its pathway is isoprenoid biosynthesis; isopentenyl diphosphate biosynthesis via DXP pathway; isopentenyl diphosphate from 1-deoxy-D-xylulose 5-phosphate: step 6/6. Its function is as follows. Catalyzes the conversion of 1-hydroxy-2-methyl-2-(E)-butenyl 4-diphosphate (HMBPP) into a mixture of isopentenyl diphosphate (IPP) and dimethylallyl diphosphate (DMAPP). Acts in the terminal step of the DOXP/MEP pathway for isoprenoid precursor biosynthesis. In Pseudomonas fluorescens, this protein is 4-hydroxy-3-methylbut-2-enyl diphosphate reductase.